The chain runs to 287 residues: Large ribosomal subunit protein uL2 (287 aa).

The interval 221-287 (RGSVMNPCDH…SKRSRGGRDS (67 aa)) is disordered. A compositionally biased stretch (basic residues) spans 258 to 287 (KTRKRNKPSNRYVLRKRRKTSKRSRGGRDS).

Belongs to the universal ribosomal protein uL2 family. As to quaternary structure, part of the 50S ribosomal subunit. Forms a bridge to the 30S subunit in the 70S ribosome.

Functionally, one of the primary rRNA binding proteins. Required for association of the 30S and 50S subunits to form the 70S ribosome, for tRNA binding and peptide bond formation. It has been suggested to have peptidyltransferase activity; this is somewhat controversial. Makes several contacts with the 16S rRNA in the 70S ribosome. This is Large ribosomal subunit protein uL2 from Parasynechococcus marenigrum (strain WH8102).